A 157-amino-acid chain; its full sequence is SsrA-binding protein (157 aa).

This sequence belongs to the SmpB family.

The protein resides in the cytoplasm. Its function is as follows. Required for rescue of stalled ribosomes mediated by trans-translation. Binds to transfer-messenger RNA (tmRNA), required for stable association of tmRNA with ribosomes. tmRNA and SmpB together mimic tRNA shape, replacing the anticodon stem-loop with SmpB. tmRNA is encoded by the ssrA gene; the 2 termini fold to resemble tRNA(Ala) and it encodes a 'tag peptide', a short internal open reading frame. During trans-translation Ala-aminoacylated tmRNA acts like a tRNA, entering the A-site of stalled ribosomes, displacing the stalled mRNA. The ribosome then switches to translate the ORF on the tmRNA; the nascent peptide is terminated with the 'tag peptide' encoded by the tmRNA and targeted for degradation. The ribosome is freed to recommence translation, which seems to be the essential function of trans-translation. This Clostridium novyi (strain NT) protein is SsrA-binding protein.